We begin with the raw amino-acid sequence, 135 residues long: AAVVALWGKIGKSADVIGNDALSRMIVVYPETKTYFSHWPDLAPGSPHIKAHGKKVMGGIALAVTKIDDLKAGLFDLSEQHAYKLRVDPSNFKILNHCILVVISIMFPKEFTPEAHVSLDKFLSGVALALAERYK.

One can recognise a Globin domain in the interval 1–135; that stretch reads AAVVALWGKI…VALALAERYK (135 aa). An O2-binding site is contributed by His-52. His-81 contributes to the heme b binding site.

Belongs to the globin family. As to quaternary structure, hb1 is a heterotetramer of two alpha chains and two beta-1 chains. Hb2 is a heterotetramer of two alpha chains and two beta-2 chains. The N-terminus is blocked. In terms of tissue distribution, red blood cells.

In terms of biological role, involved in oxygen transport from gills to the various peripheral tissues. The polypeptide is Hemoglobin subunit alpha (Dissostichus eleginoides (Patagonian toothfish)).